The following is a 73-amino-acid chain: Small proline-rich protein 2G (73 aa).

Positions 1 to 11 are enriched in low complexity; sequence MSYQQQQCKQP. A disordered region spans residues 1–20; that stretch reads MSYQQQQCKQPCQPPPVCPT. 3 consecutive repeat copies span residues 21-29, 30-38, and 39-47. A 3 X 9 AA approximate tandem repeats region spans residues 21–47; it reads PKCPEPCPPPKCPEPYLPPPCPPEHCP.

It belongs to the cornifin (SPRR) family.

Its subcellular location is the cytoplasm. Functionally, cross-linked envelope protein of keratinocytes. It is a keratinocyte protein that first appears in the cell cytosol, but ultimately becomes cross-linked to membrane proteins by transglutaminase. All that results in the formation of an insoluble envelope beneath the plasma membrane. The chain is Small proline-rich protein 2G (SPRR2G) from Homo sapiens (Human).